Here is a 125-residue protein sequence, read N- to C-terminus: Ribonuclease P protein component (125 aa).

It belongs to the RnpA family. In terms of assembly, consists of a catalytic RNA component (M1 or rnpB) and a protein subunit.

The enzyme catalyses Endonucleolytic cleavage of RNA, removing 5'-extranucleotides from tRNA precursor.. Functionally, RNaseP catalyzes the removal of the 5'-leader sequence from pre-tRNA to produce the mature 5'-terminus. It can also cleave other RNA substrates such as 4.5S RNA. The protein component plays an auxiliary but essential role in vivo by binding to the 5'-leader sequence and broadening the substrate specificity of the ribozyme. This chain is Ribonuclease P protein component, found in Rhodococcus opacus (strain B4).